Consider the following 245-residue polypeptide: Geranylgeranylglyceryl phosphate synthase (245 aa).

Residues aspartate 22 and serine 51 each coordinate Mg(2+). Sn-glycerol 1-phosphate contacts are provided by residues 169–175, 200–201, and 222–223; these read YLEAGSG, GG, and GT.

It belongs to the GGGP/HepGP synthase family. Group II subfamily. As to quaternary structure, homopentamer. The cofactor is Mg(2+).

It is found in the cytoplasm. The catalysed reaction is sn-glycerol 1-phosphate + (2E,6E,10E)-geranylgeranyl diphosphate = sn-3-O-(geranylgeranyl)glycerol 1-phosphate + diphosphate. Its pathway is membrane lipid metabolism; glycerophospholipid metabolism. With respect to regulation, inhibited by EDTA in vitro. Prenyltransferase that catalyzes the transfer of the geranylgeranyl moiety of geranylgeranyl diphosphate (GGPP) to the C3 hydroxyl of sn-glycerol-1-phosphate (G1P). This reaction is the first ether-bond-formation step in the biosynthesis of archaeal membrane lipids. Cannot use sn-glycerol-3-phosphate (G3P) or dihydroxyacetonephosphate (DHAP) as substrate. The polypeptide is Geranylgeranylglyceryl phosphate synthase (Methanothermobacter marburgensis (strain ATCC BAA-927 / DSM 2133 / JCM 14651 / NBRC 100331 / OCM 82 / Marburg) (Methanobacterium thermoautotrophicum)).